Consider the following 327-residue polypeptide: Annexin A8 (327 aa).

Annexin repeat units lie at residues 21 to 92, 93 to 164, 177 to 249, and 253 to 324; these read FNPD…ALMY, PPYR…CLLQ, GLAL…TVVK, and NLHG…NLVG. Met-266, Gly-268, Gly-270, and Asp-310 together coordinate Ca(2+).

Belongs to the annexin family.

In terms of biological role, this protein is an anticoagulant protein that acts as an indirect inhibitor of the thromboplastin-specific complex, which is involved in the blood coagulation cascade. This Bos taurus (Bovine) protein is Annexin A8 (ANXA8).